The primary structure comprises 353 residues: Ferredoxin--NADP reductase (353 aa).

FAD is bound by residues aspartate 33, glutamine 41, tyrosine 46, valine 86, phenylalanine 121, aspartate 293, and threonine 333.

It belongs to the ferredoxin--NADP reductase type 2 family. Homodimer. The cofactor is FAD.

It catalyses the reaction 2 reduced [2Fe-2S]-[ferredoxin] + NADP(+) + H(+) = 2 oxidized [2Fe-2S]-[ferredoxin] + NADPH. This is Ferredoxin--NADP reductase from Verminephrobacter eiseniae (strain EF01-2).